Reading from the N-terminus, the 279-residue chain is Borealin (279 aa).

The segment covering Lys135–Arg152 has biased composition (basic residues). The disordered stretch occupies residues Lys135–Glu180. Positions Ala153–Lys163 are enriched in polar residues.

This sequence belongs to the borealin family. Component of the CPC at least composed of survivin/birc5, incenp, cdca8/borealin and/or cdca9/dasra-A, and aurkb/aurora-B. Interacts with incenp (via N-terminus).

The protein resides in the nucleus. Its subcellular location is the chromosome. The protein localises to the centromere. It localises to the cytoplasm. It is found in the cytoskeleton. The protein resides in the spindle. Functionally, component of the chromosomal passenger complex (CPC), a complex that acts as a key regulator of mitosis. The CPC complex has essential functions at the centromere in ensuring correct chromosome alignment and segregation and is required for chromatin-induced microtubule stabilization and spindle assembly. Contributes to CPC function by facilitating loading of the CPC onto chromosomes. This is Borealin (cdca8) from Xenopus tropicalis (Western clawed frog).